The following is a 295-amino-acid chain: Glycine--tRNA ligase alpha subunit (295 aa).

Belongs to the class-II aminoacyl-tRNA synthetase family. Tetramer of two alpha and two beta subunits.

The protein localises to the cytoplasm. The enzyme catalyses tRNA(Gly) + glycine + ATP = glycyl-tRNA(Gly) + AMP + diphosphate. The sequence is that of Glycine--tRNA ligase alpha subunit from Prochlorococcus marinus (strain MIT 9215).